A 454-amino-acid chain; its full sequence is Toluate 1,2-dioxygenase subunit alpha (454 aa).

In terms of domain architecture, Rieske spans I51 to L148. [2Fe-2S] cluster is bound by residues C92, H94, C112, and H115. The Fe cation site is built by H221 and H226.

This sequence belongs to the bacterial ring-hydroxylating dioxygenase alpha subunit family. This dioxygenase system consists of three proteins: the two subunits of the hydroxylase component (XylX and XylY), and an electron transfer component (XylZ). [2Fe-2S] cluster serves as cofactor. Fe cation is required as a cofactor.

The protein operates within xenobiotic degradation; toluene degradation. In Pseudomonas putida (Arthrobacter siderocapsulatus), this protein is Toluate 1,2-dioxygenase subunit alpha (xylX).